The following is a 1008-amino-acid chain: Envelopment polyprotein (1008 aa).

A signal peptide spans 1–17; it reads MVRTYLLLLLLCGPATP. Over 18 to 394 the chain is Lumenal; sequence FFNHLMDVTR…NWANIHCFSK (377 aa). N-linked (GlcNAc...) asparagine; by host glycosylation is found at Asn-34, Asn-70, and Asn-108. 8 disulfides stabilise this stretch: Cys-138–Cys-269, Cys-156–Cys-166, Cys-206–Cys-247, Cys-216–Cys-226, Cys-233–Cys-238, Cys-292–Cys-295, Cys-299–Cys-368, and Cys-319–Cys-324. Asn-208 carries an N-linked (GlcNAc...) asparagine; by host glycan. Residues 395–415 form a helical membrane-spanning segment; that stretch reads EQVLILVAVSSLCILLLASVL. The Cytoplasmic segment spans residues 416–496; the sequence is RALKVIATFT…VRQKMFNLTR (81 aa). The golgi retention signal stretch occupies residues 419–465; that stretch reads KVIATFTWKIIKPFWWILSLLCRTCSKRLNKRAERLKESIHSLEEGL. The tract at residues 461–465 is important for correct targeting of the glycoproteins to the Golgi complex but not for heterodimerization; it reads LEEGL. Positions 497–513 are internal signal sequence for glycoprotein C; the sequence is LSPVVVGMLCLACPVES. Cystine bridges form between Cys-514/Cys-555, Cys-527/Cys-537, Cys-580/Cys-677, Cys-595/Cys-789, Cys-601/Cys-650, Cys-607/Cys-657, Cys-612/Cys-639, Cys-643/Cys-648, Cys-728/Cys-742, Cys-758/Cys-771, Cys-851/Cys-924, and Cys-861/Cys-864. Topologically, residues 514–977 are lumenal; the sequence is CSDSISVTAS…GWFKASWLRA (464 aa). Positions 601-607 are fusion loop; it reads CHLMGAC. Residues 644–655 form a fusion loop region; sequence GGALCQCFNMRP. N-linked (GlcNAc...) asparagine; by host glycans are attached at residues Asn-691 and Asn-696. N-linked (GlcNAc...) asparagine; by host glycosylation is found at Asn-912 and Asn-949. Residues 978 to 998 form a helical membrane-spanning segment; the sequence is IWAILGGTVSLIIGVVIIYMV. At 999–1008 the chain is on the cytoplasmic side; it reads FTLCLKVKKS.

The protein belongs to the phlebovirus envelope glycoprotein family. Homodimer. Heterodimer with glycoprotein C. Homotrimer (postfusion). In terms of assembly, heterodimer with glycoprotein N. Homotrimer (postfusion). Specific enzymatic cleavages in vivo yield mature proteins including glycoprotein C and glycoprotein N. In terms of processing, the cytoplasmic tail is Palmitoylated. Post-translationally, glycosylated. Contains principally poly-N-acetyllactosamine glycans. Glycosylated. Contains principally oligomannose-type glycans that can attach to host CD209/DC-SIGN. In terms of processing, palmitoylated.

Its subcellular location is the virion membrane. It is found in the host Golgi apparatus membrane. The protein resides in the host endoplasmic reticulum membrane. In terms of biological role, structural component of the virion that interacts with glycoprotein C. It shields the hydrophobic fusion loops of the glycoprotein C, preventing premature fusion. The glycoprotein protrusions are arranged on an icosahedral lattice, with T=12 triangulation. They are able to attach the virion to the host cell receptor CD209/DC-SIGN and to promote fusion of membranes with the late endosome after endocytosis of the virion. Plays a role in the packaging of ribonucleoproteins during virus assembly. Structural component of the virion that interacts with glycoprotein N. Acts as a class II fusion protein that is activated upon acidification and subsequent repositioning of the glycoprotein N. The glycoprotein protrusions are arranged on an icosahedral lattice, with T=12 triangulation. They are able to attach the virion to the host cell receptor CD209/DC-SIGN and to promote fusion of membranes with the late endosome after endocytosis of the virion. The sequence is that of Envelopment polyprotein (GP) from Homo sapiens (Human).